Reading from the N-terminus, the 548-residue chain is Chaperonin GroEL (548 aa).

ATP-binding positions include 30-33, K51, 87-91, G415, 479-481, and D495; these read TLGP, DGTTT, and NAA.

It belongs to the chaperonin (HSP60) family. As to quaternary structure, forms a cylinder of 14 subunits composed of two heptameric rings stacked back-to-back. Interacts with the co-chaperonin GroES. In terms of processing, UMPylated on a tyrosine residue by YdiU under ATP-limited conditions.

It localises to the cytoplasm. It catalyses the reaction ATP + H2O + a folded polypeptide = ADP + phosphate + an unfolded polypeptide.. UMPylation of the chaperone by YdiU negatively regulates its activity, facilitating Salmonella survival under ATP-limited conditions. In terms of biological role, together with its co-chaperonin GroES, plays an essential role in assisting protein folding. The GroEL-GroES system forms a nano-cage that allows encapsulation of the non-native substrate proteins and provides a physical environment optimized to promote and accelerate protein folding. This is Chaperonin GroEL from Salmonella typhimurium (strain LT2 / SGSC1412 / ATCC 700720).